The chain runs to 205 residues: Transcription antitermination protein NusB (205 aa).

The protein belongs to the NusB family.

Involved in transcription antitermination. Required for transcription of ribosomal RNA (rRNA) genes. Binds specifically to the boxA antiterminator sequence of the ribosomal RNA (rrn) operons. In Acaryochloris marina (strain MBIC 11017), this protein is Transcription antitermination protein NusB.